The primary structure comprises 242 residues: Endoglucanase (242 aa).

Positions 1–21 (MQVIVLPLVFLATFATSGSLA) are cleaved as a signal peptide. D47 functions as the Nucleophile in the catalytic mechanism. 3 N-linked (GlcNAc...) asparagine glycosylation sites follow: N79, N103, and N217.

This sequence belongs to the glycosyl hydrolase 45 (cellulase K) family. As to expression, expressed in larval carcasses and gut, and adult gut.

It is found in the secreted. It catalyses the reaction Endohydrolysis of (1-&gt;4)-beta-D-glucosidic linkages in cellulose, lichenin and cereal beta-D-glucans.. This Phaedon cochleariae (Mustard beetle) protein is Endoglucanase.